Here is a 331-residue protein sequence, read N- to C-terminus: Probable zinc-binding oxidoreductase, mitochondrial (331 aa).

The span at 1–29 shows a compositional bias: polar residues; the sequence is MASVTSVPKTGRSVNQDVPATTLTLQTRP. The tract at residues 1-34 is disordered; that stretch reads MASVTSVPKTGRSVNQDVPATTLTLQTRPTPAPN.

Belongs to the zinc-containing alcohol dehydrogenase family. Quinone oxidoreductase subfamily.

The protein resides in the mitochondrion. The protein is Probable zinc-binding oxidoreductase, mitochondrial of Arthroderma benhamiae (strain ATCC MYA-4681 / CBS 112371) (Trichophyton mentagrophytes).